Reading from the N-terminus, the 310-residue chain is Ribosomal protein L11 methyltransferase (310 aa).

The S-adenosyl-L-methionine site is built by threonine 156, glycine 179, aspartate 201, and asparagine 246.

This sequence belongs to the methyltransferase superfamily. PrmA family.

It is found in the cytoplasm. The catalysed reaction is L-lysyl-[protein] + 3 S-adenosyl-L-methionine = N(6),N(6),N(6)-trimethyl-L-lysyl-[protein] + 3 S-adenosyl-L-homocysteine + 3 H(+). Its function is as follows. Methylates ribosomal protein L11. The chain is Ribosomal protein L11 methyltransferase from Desulfatibacillum aliphaticivorans.